We begin with the raw amino-acid sequence, 517 residues long: Zinc finger protein 215 (517 aa).

Residues 48–126 enclose the SCAN box domain; that stretch reads RQKFRHFQYL…KDMVTLIEDV (79 aa). The KRAB domain maps to 164-237; it reads VTFKDVVVEF…EKEIPRKTIF (74 aa). C2H2-type zinc fingers lie at residues 379-401, 407-429, 462-484, and 490-512; these read YECY…QIIH, YKCS…QKLH, YQCV…QMIH, and FKCK…QKLH.

Belongs to the krueppel C2H2-type zinc-finger protein family.

It is found in the nucleus. May be involved in transcriptional regulation. The sequence is that of Zinc finger protein 215 (ZNF215) from Homo sapiens (Human).